Here is a 309-residue protein sequence, read N- to C-terminus: Solute carrier family 25 member 48 (309 aa).

Solcar repeat units follow at residues 3–86, 99–209, and 218–305; these read VFQL…TQRL, CSML…FCNW, and PPPC…SLQF. Helical transmembrane passes span 9-29, 61-81, 105-125, 186-206, 218-238, and 281-299; these read FLAGWIGGASSVIVGHPLDTV, GLSFPLASITLYNSMVFGFFS, TVASMLTGLVSVGVGAPVDLV, GAMILRDIPGYALYFIPYTLF, PPPCCIWLAGGLAGSISWVTA, and ATVNAIRGFPMCATMFLGY.

It belongs to the mitochondrial carrier (TC 2.A.29) family.

The protein localises to the mitochondrion inner membrane. The polypeptide is Solute carrier family 25 member 48 (slc25a48) (Danio rerio (Zebrafish)).